The following is a 358-amino-acid chain: Homoserine O-acetyltransferase (358 aa).

Positions 41-343 (NAVLICHALT…DYGHDAFLVD (303 aa)) constitute an AB hydrolase-1 domain. Residue S143 is the Nucleophile of the active site. Position 212 (R212) interacts with substrate. Residues D304 and H337 contribute to the active site. D338 provides a ligand contact to substrate.

Homodimer.

It localises to the cytoplasm. It carries out the reaction L-homoserine + acetyl-CoA = O-acetyl-L-homoserine + CoA. It participates in amino-acid biosynthesis; L-methionine biosynthesis via de novo pathway; O-acetyl-L-homoserine from L-homoserine: step 1/1. Transfers an acetyl group from acetyl-CoA to L-homoserine, forming acetyl-L-homoserine. Utilizes a ping-pong kinetic mechanism in which the acetyl group of acetyl-CoA is initially transferred to the enzyme to form an acetyl-enzyme intermediate before subsequent transfer to homoserine to form the final product, O-acetylhomoserine. This is Homoserine O-acetyltransferase from Haemophilus influenzae (strain ATCC 51907 / DSM 11121 / KW20 / Rd).